A 148-amino-acid chain; its full sequence is Ribonuclease P protein component (148 aa).

The tract at residues 119 to 148 (PLPAAPGTMPPARAPRPSSLSPTEPDPRSD) is disordered.

This sequence belongs to the RnpA family. In terms of assembly, consists of a catalytic RNA component (M1 or rnpB) and a protein subunit.

The enzyme catalyses Endonucleolytic cleavage of RNA, removing 5'-extranucleotides from tRNA precursor.. RNaseP catalyzes the removal of the 5'-leader sequence from pre-tRNA to produce the mature 5'-terminus. It can also cleave other RNA substrates such as 4.5S RNA. The protein component plays an auxiliary but essential role in vivo by binding to the 5'-leader sequence and broadening the substrate specificity of the ribozyme. The chain is Ribonuclease P protein component from Xanthomonas campestris pv. campestris (strain 8004).